We begin with the raw amino-acid sequence, 485 residues long: Pentatricopeptide repeat-containing protein At1g62720 (485 aa).

PPR repeat units follow at residues 68–102, 103–137, 138–172, 173–207, 208–242, 243–277, 278–312, 313–347, 348–378, 380–414, 415–449, and 450–484; these read SIVD…GIGH, DLYS…GYEP, DVVT…GFRP, DVVI…GVRA, DAVT…DIVP, NVIT…CVDP, DVFT…GCLP, DVVT…GLVG, DTIT…MDSR, NIRT…EIEL, DITT…GLKP, and DVVS…GLLP.

The protein belongs to the PPR family. P subfamily.

The chain is Pentatricopeptide repeat-containing protein At1g62720 from Arabidopsis thaliana (Mouse-ear cress).